The chain runs to 164 residues: 3-hydroxyacyl-[acyl-carrier-protein] dehydratase FabZ (164 aa).

The active site involves His-61.

This sequence belongs to the thioester dehydratase family. FabZ subfamily.

It localises to the cytoplasm. The catalysed reaction is a (3R)-hydroxyacyl-[ACP] = a (2E)-enoyl-[ACP] + H2O. In terms of biological role, involved in unsaturated fatty acids biosynthesis. Catalyzes the dehydration of short chain beta-hydroxyacyl-ACPs and long chain saturated and unsaturated beta-hydroxyacyl-ACPs. The polypeptide is 3-hydroxyacyl-[acyl-carrier-protein] dehydratase FabZ (Ralstonia nicotianae (strain ATCC BAA-1114 / GMI1000) (Ralstonia solanacearum)).